The sequence spans 273 residues: Polyamine aminopropyltransferase (273 aa).

The PABS domain maps to 5–238; the sequence is ENWFSERYSD…GFWSFTVASP (234 aa). Gln-34 contributes to the S-methyl-5'-thioadenosine binding site. 2 residues coordinate spermidine: His-65 and Asp-90. S-methyl-5'-thioadenosine is bound by residues Glu-109 and 140–141; that span reads DG. The Proton acceptor role is filled by Asp-158. 158 to 161 contacts spermidine; it reads DSTD. Pro-165 is an S-methyl-5'-thioadenosine binding site.

The protein belongs to the spermidine/spermine synthase family. Homodimer or homotetramer.

The protein resides in the cytoplasm. It catalyses the reaction S-adenosyl 3-(methylsulfanyl)propylamine + putrescine = S-methyl-5'-thioadenosine + spermidine + H(+). Its pathway is amine and polyamine biosynthesis; spermidine biosynthesis; spermidine from putrescine: step 1/1. In terms of biological role, catalyzes the irreversible transfer of a propylamine group from the amino donor S-adenosylmethioninamine (decarboxy-AdoMet) to putrescine (1,4-diaminobutane) to yield spermidine. The polypeptide is Polyamine aminopropyltransferase (Thermoplasma acidophilum (strain ATCC 25905 / DSM 1728 / JCM 9062 / NBRC 15155 / AMRC-C165)).